The following is a 148-amino-acid chain: MKLDLKILDARMRDYMPAYATTGSAGLDLRACLDAPVTLQPGETTLVPTGLAIHLADPGYAALILPRSGLGHKHGIVLGNLVGLIDSDYQGQLMVSTWNRGQTEFVLNPFERLAQLVIVPVVQAQFNIVDDFAQSDRGEGGFGSTGRH.

Residues 67 to 69 (RSG), asparagine 80, 84 to 86 (LID), and methionine 94 contribute to the substrate site.

It belongs to the dUTPase family. The cofactor is Mg(2+).

It catalyses the reaction dUTP + H2O = dUMP + diphosphate + H(+). The protein operates within pyrimidine metabolism; dUMP biosynthesis; dUMP from dCTP (dUTP route): step 2/2. This enzyme is involved in nucleotide metabolism: it produces dUMP, the immediate precursor of thymidine nucleotides and it decreases the intracellular concentration of dUTP so that uracil cannot be incorporated into DNA. The polypeptide is Deoxyuridine 5'-triphosphate nucleotidohydrolase (Burkholderia ambifaria (strain ATCC BAA-244 / DSM 16087 / CCUG 44356 / LMG 19182 / AMMD) (Burkholderia cepacia (strain AMMD))).